The sequence spans 164 residues: Kunitz-type proteinase inhibitor BbCI (164 aa).

Belongs to the protease inhibitor I3 (leguminous Kunitz-type inhibitor) family.

It localises to the secreted. Inhibits T.cruzi cruzipain. This Bauhinia bauhinioides (Perlebia bauhinoides) protein is Kunitz-type proteinase inhibitor BbCI.